A 330-amino-acid polypeptide reads, in one-letter code: Anthranilate phosphoribosyltransferase (330 aa).

Residues Gly-79, 82–83 (GD), Thr-87, 89–92 (NIST), 107–115 (KHGNYGVSS), and Ser-119 contribute to the 5-phospho-alpha-D-ribose 1-diphosphate site. Position 79 (Gly-79) interacts with anthranilate. Ser-91 is a Mg(2+) binding site. Asn-110 is a binding site for anthranilate. Arg-165 is an anthranilate binding site. Mg(2+)-binding residues include Asp-223 and Glu-224.

It belongs to the anthranilate phosphoribosyltransferase family. As to quaternary structure, homodimer. The cofactor is Mg(2+).

The catalysed reaction is N-(5-phospho-beta-D-ribosyl)anthranilate + diphosphate = 5-phospho-alpha-D-ribose 1-diphosphate + anthranilate. The protein operates within amino-acid biosynthesis; L-tryptophan biosynthesis; L-tryptophan from chorismate: step 2/5. Catalyzes the transfer of the phosphoribosyl group of 5-phosphorylribose-1-pyrophosphate (PRPP) to anthranilate to yield N-(5'-phosphoribosyl)-anthranilate (PRA). This is Anthranilate phosphoribosyltransferase from Flavobacterium johnsoniae (strain ATCC 17061 / DSM 2064 / JCM 8514 / BCRC 14874 / CCUG 350202 / NBRC 14942 / NCIMB 11054 / UW101) (Cytophaga johnsonae).